A 217-amino-acid polypeptide reads, in one-letter code: Putative thymidylate synthase (217 aa).

Cys-139 is a catalytic residue.

Belongs to the thymidylate synthase family. Archaeal-type ThyA subfamily. In terms of assembly, monomer.

It localises to the cytoplasm. The protein operates within pyrimidine metabolism; dTTP biosynthesis. Functionally, may catalyze the biosynthesis of dTMP using an unknown cosubstrate. The polypeptide is Putative thymidylate synthase (Methanosarcina mazei (strain ATCC BAA-159 / DSM 3647 / Goe1 / Go1 / JCM 11833 / OCM 88) (Methanosarcina frisia)).